The primary structure comprises 370 residues: MTQKTLLNDTHRALGAKMVDFGGWDMPIHYGSQLDEHHLVRRESGVFDVSHMTVVDLRGDQVRPFLRRLLANSVDKLKVPGKALYSCMLNPRGGVIDDLIVYYLGDDFFRMVVNASTREKDLAWLREQAAPFGVSVEQRPDLAILAVQGPQARAIVIGLARESEREALTKLGRFAALQVQSDDGVELFVARTGYTGEDGFEILLPQDAVVAFWNRLLAAGVKPAGLGARDTLRLEAGMNLYGQDMDEEISPYEAALAWTVSLDEGRDFIGRDALEAQKAAGTARQMIGLVMDEKGVLRHGQAVTTAGGQGEILSGTFSPTLAKGIAFARVPAGELGEVTVDIRGRQVPVRVVKFPFVREGQAQPGVLADA.

Belongs to the GcvT family. As to quaternary structure, the glycine cleavage system is composed of four proteins: P, T, L and H.

It catalyses the reaction N(6)-[(R)-S(8)-aminomethyldihydrolipoyl]-L-lysyl-[protein] + (6S)-5,6,7,8-tetrahydrofolate = N(6)-[(R)-dihydrolipoyl]-L-lysyl-[protein] + (6R)-5,10-methylene-5,6,7,8-tetrahydrofolate + NH4(+). Functionally, the glycine cleavage system catalyzes the degradation of glycine. This chain is Aminomethyltransferase, found in Stenotrophomonas maltophilia (strain K279a).